Consider the following 56-residue polypeptide: Chymotrypsin inhibitor (56 aa).

Intrachain disulfides connect Cys3–Cys36, Cys12–Cys32, Cys16–Cys28, Cys20–Cys56, and Cys38–Cys50. The TIL domain occupies 3-56 (CGPNEVFNTCGSACAPTCAQPKTRICTMQCRIGCQCQEGFLRNGEGACVLPENC).

The protein belongs to the serine protease inhibitor-like (TIL domain-containing) family.

The protein localises to the secreted. Functionally, chymotrypsin and cathepsin G inhibitor. In Apis mellifera (Honeybee), this protein is Chymotrypsin inhibitor.